Here is a 141-residue protein sequence, read N- to C-terminus: Large ribosomal subunit protein uL11 (141 aa).

Belongs to the universal ribosomal protein uL11 family. As to quaternary structure, part of the ribosomal stalk of the 50S ribosomal subunit. Interacts with L10 and the large rRNA to form the base of the stalk. L10 forms an elongated spine to which L12 dimers bind in a sequential fashion forming a multimeric L10(L12)X complex. One or more lysine residues are methylated.

In terms of biological role, forms part of the ribosomal stalk which helps the ribosome interact with GTP-bound translation factors. The polypeptide is Large ribosomal subunit protein uL11 (Prochlorococcus marinus subsp. pastoris (strain CCMP1986 / NIES-2087 / MED4)).